A 106-amino-acid chain; its full sequence is MSQFTRISIQQAAALLQLPSVCLADIRDPSSFNAAHVTGAFHLTNDTLPQFTQQITKETPVLVMCYHGNSSQGVANYLTSIGYEKVYSIDGGFEGWRHVYPYTATV.

Residues 17–105 (QLPSVCLADI…WRHVYPYTAT (89 aa)) enclose the Rhodanese domain. Cys-65 serves as the catalytic Cysteine persulfide intermediate.

Belongs to the GlpE family.

The protein localises to the cytoplasm. The enzyme catalyses thiosulfate + hydrogen cyanide = thiocyanate + sulfite + 2 H(+). The catalysed reaction is thiosulfate + [thioredoxin]-dithiol = [thioredoxin]-disulfide + hydrogen sulfide + sulfite + 2 H(+). In terms of biological role, transferase that catalyzes the transfer of sulfur from thiosulfate to thiophilic acceptors such as cyanide or dithiols. May function in a CysM-independent thiosulfate assimilation pathway by catalyzing the conversion of thiosulfate to sulfite, which can then be used for L-cysteine biosynthesis. The protein is Thiosulfate sulfurtransferase GlpE of Tolumonas auensis (strain DSM 9187 / NBRC 110442 / TA 4).